Reading from the N-terminus, the 283-residue chain is 5'-nucleotidase SurE 2 (283 aa).

4 residues coordinate a divalent metal cation: Asp19, Asp20, Ser52, and Asn110.

This sequence belongs to the SurE nucleotidase family. Requires a divalent metal cation as cofactor.

The protein resides in the cytoplasm. It catalyses the reaction a ribonucleoside 5'-phosphate + H2O = a ribonucleoside + phosphate. Its function is as follows. Nucleotidase that shows phosphatase activity on nucleoside 5'-monophosphates. In Chlamydia caviae (strain ATCC VR-813 / DSM 19441 / 03DC25 / GPIC) (Chlamydophila caviae), this protein is 5'-nucleotidase SurE 2.